We begin with the raw amino-acid sequence, 462 residues long: Gastric inhibitory polypeptide receptor (462 aa).

A signal peptide spans 1 to 18; sequence MPLRPRLLLLCLWGLLLQ. Residues 19 to 135 lie on the Extracellular side of the membrane; that stretch reads QAETDSEGQT…DQRLILERLQ (117 aa). 3 disulfides stabilise this stretch: cysteine 43–cysteine 67, cysteine 58–cysteine 100, and cysteine 81–cysteine 115. N-linked (GlcNAc...) asparagine glycans are attached at residues asparagine 59 and asparagine 74. Residues 136–158 traverse the membrane as a helical segment; that stretch reads VVYTVGYSLSLGTLLLALLILSL. At 159–166 the chain is on the cytoplasmic side; the sequence is FRRLHCTR. Residues 167-186 traverse the membrane as a helical segment; that stretch reads NYIHMNVFLSFMLRAVAILT. Over 187-214 the chain is Extracellular; sequence RDRLLPTLGPYPGDRTLTLRNQALAACR. The helical transmembrane segment at 215–239 threads the bilayer; it reads TAQIVTQYCVGANYTWLLVEGVYLH. Over 240–251 the chain is Cytoplasmic; sequence HLLVIVGGSEKG. The helical transmembrane segment at 252 to 275 threads the bilayer; that stretch reads HFRCYLLLGWGAPALFVIPWVIVR. At 276-290 the chain is on the extracellular side; that stretch reads YLLENTQCWERNEVK. The chain crosses the membrane as a helical span at residues 291–316; it reads AIWWIIRTPILITILINFFIFIRILG. The Cytoplasmic segment spans residues 317–338; the sequence is ILVSKLRTRQMRCPDYRLRLAR. Residues 339–359 traverse the membrane as a helical segment; sequence STLTLVPLLGVHEVVFAPVTE. The Extracellular portion of the chain corresponds to 360–374; sequence EQAEGTLRFAKLAFE. Residues 375–395 form a helical membrane-spanning segment; the sequence is IFLSSFQGFLVSVLYCFINKE. At 396-462 the chain is on the cytoplasmic side; the sequence is VQSEIRRSWR…PGEEVLESYC (67 aa). The segment at 421–462 is disordered; it reads HAELGPQALPSRSAPREVPITGSTLPSGPLHGPGEEVLESYC.

This sequence belongs to the G-protein coupled receptor 2 family. May form homodimers and heterodimers with GLP1R. In terms of processing, N-glycosylation is required for cell surface expression and lengthens receptor half-life by preventing degradation in the ER. Widely distributed including pancreatic islets, brain and various peripheral tissues.

Its subcellular location is the cell membrane. In terms of biological role, this is a receptor for GIP. The activity of this receptor is mediated by G proteins which activate adenylyl cyclase. The sequence is that of Gastric inhibitory polypeptide receptor (GIPR) from Mesocricetus auratus (Golden hamster).